The sequence spans 178 residues: Nucleolar protein 16 (178 aa).

The interval 1-31 (MPKAKGKTRRQKFGYSVNRKRLNRNARRKAA) is disordered. Position 8 is a phosphothreonine (T8). S16 carries the post-translational modification Phosphoserine. K74 is covalently cross-linked (Glycyl lysine isopeptide (Lys-Gly) (interchain with G-Cter in SUMO2)). An N6-acetyllysine modification is found at K90. T144 is subject to Phosphothreonine. Residues F166, L167, K172, and R173 each participate in a glycyl lysine isopeptide (Lys-Gly) (interchain with G-Cter in SUMO2) cross-link.

Belongs to the NOP16 family.

The protein resides in the nucleus. The protein localises to the nucleolus. The protein is Nucleolar protein 16 (NOP16) of Homo sapiens (Human).